Here is a 158-residue protein sequence, read N- to C-terminus: Urease accessory protein UreE (158 aa).

This sequence belongs to the UreE family.

Its subcellular location is the cytoplasm. Involved in urease metallocenter assembly. Binds nickel. Probably functions as a nickel donor during metallocenter assembly. The chain is Urease accessory protein UreE from Corynebacterium urealyticum (strain ATCC 43042 / DSM 7109).